A 211-amino-acid polypeptide reads, in one-letter code: Protein-L-isoaspartate O-methyltransferase (211 aa).

S62 is an active-site residue.

Belongs to the methyltransferase superfamily. L-isoaspartyl/D-aspartyl protein methyltransferase family.

It localises to the cytoplasm. The enzyme catalyses [protein]-L-isoaspartate + S-adenosyl-L-methionine = [protein]-L-isoaspartate alpha-methyl ester + S-adenosyl-L-homocysteine. Catalyzes the methyl esterification of L-isoaspartyl residues in peptides and proteins that result from spontaneous decomposition of normal L-aspartyl and L-asparaginyl residues. It plays a role in the repair and/or degradation of damaged proteins. The protein is Protein-L-isoaspartate O-methyltransferase of Shewanella baltica (strain OS223).